We begin with the raw amino-acid sequence, 570 residues long: Probable electron transfer flavoprotein-ubiquinone oxidoreductase (570 aa).

FAD is bound at residue 13 to 27; sequence VVIVGAGPAGLSAAI. Residues C515, C539, C542, and C545 each contribute to the [4Fe-4S] cluster site. The 4Fe-4S ferredoxin-type domain maps to 530 to 559; it reads KRFQINAANCVHCKTCDIKDPSQNITWVTP.

[4Fe-4S] cluster serves as cofactor. FAD is required as a cofactor.

It carries out the reaction a ubiquinone + reduced [electron-transfer flavoprotein] = a ubiquinol + oxidized [electron-transfer flavoprotein] + H(+). Its function is as follows. Accepts electrons from ETF and reduces ubiquinone. In Acinetobacter baylyi (strain ATCC 33305 / BD413 / ADP1), this protein is Probable electron transfer flavoprotein-ubiquinone oxidoreductase (etfD).